Reading from the N-terminus, the 144-residue chain is Urease subunit beta (144 aa).

Residues 110–119 are compositionally biased toward low complexity; it reads HAAPAAPAIP. A disordered region spans residues 110–144; sequence HAAPAAPAIPARHESAAGDAPSPLKERAGFDNETR. Residues 133 to 144 are compositionally biased toward basic and acidic residues; sequence LKERAGFDNETR.

The protein belongs to the urease beta subunit family. Heterotrimer of UreA (gamma), UreB (beta) and UreC (alpha) subunits. Three heterotrimers associate to form the active enzyme.

Its subcellular location is the cytoplasm. The catalysed reaction is urea + 2 H2O + H(+) = hydrogencarbonate + 2 NH4(+). It functions in the pathway nitrogen metabolism; urea degradation; CO(2) and NH(3) from urea (urease route): step 1/1. This is Urease subunit beta from Micrococcus luteus (strain ATCC 4698 / DSM 20030 / JCM 1464 / CCM 169 / CCUG 5858 / IAM 1056 / NBRC 3333 / NCIMB 9278 / NCTC 2665 / VKM Ac-2230) (Micrococcus lysodeikticus).